A 1063-amino-acid chain; its full sequence is Cobalt-zinc-cadmium resistance protein CzcA (1063 aa).

Helical transmembrane passes span tryptophan 14–leucine 34, glycine 350–isoleucine 370, threonine 371–isoleucine 391, leucine 395–glutamate 415, leucine 452–valine 472, alanine 487–isoleucine 507, leucine 534–isoleucine 554, valine 883–isoleucine 903, glycine 906–isoleucine 926, valine 937–isoleucine 957, proline 981–glycine 1001, and valine 1013–tyrosine 1033. Residues aspartate 1040–alanine 1063 form a disordered region. Residues proline 1049–alanine 1063 are compositionally biased toward polar residues.

This sequence belongs to the resistance-nodulation-cell division (RND) (TC 2.A.6) family.

The protein localises to the cell inner membrane. In terms of biological role, has a low cation transport activity for cobalt, it is essential for the expression of cobalt, zinc, and cadmium resistance. CzcA and CzcB together would act in zinc efflux nearly as effectively as the complete CZC efflux system (CzcABC). This is Cobalt-zinc-cadmium resistance protein CzcA (czcA) from Cupriavidus metallidurans (strain ATCC 43123 / DSM 2839 / NBRC 102507 / CH34) (Ralstonia metallidurans).